A 425-amino-acid chain; its full sequence is Enolase (425 aa).

Gln-163 serves as a coordination point for (2R)-2-phosphoglycerate. The Proton donor role is filled by Glu-205. Asp-242, Glu-285, and Asp-312 together coordinate Mg(2+). (2R)-2-phosphoglycerate contacts are provided by Lys-337, Arg-366, Ser-367, and Lys-388. The Proton acceptor role is filled by Lys-337.

The protein belongs to the enolase family. Mg(2+) is required as a cofactor.

The protein resides in the cytoplasm. The protein localises to the secreted. It is found in the cell surface. It catalyses the reaction (2R)-2-phosphoglycerate = phosphoenolpyruvate + H2O. It participates in carbohydrate degradation; glycolysis; pyruvate from D-glyceraldehyde 3-phosphate: step 4/5. Its function is as follows. Catalyzes the reversible conversion of 2-phosphoglycerate (2-PG) into phosphoenolpyruvate (PEP). It is essential for the degradation of carbohydrates via glycolysis. In Acidiphilium cryptum (strain JF-5), this protein is Enolase.